A 125-amino-acid polypeptide reads, in one-letter code: Large ribosomal subunit protein bL12 (125 aa).

This sequence belongs to the bacterial ribosomal protein bL12 family. Homodimer. Part of the ribosomal stalk of the 50S ribosomal subunit. Forms a multimeric L10(L12)X complex, where L10 forms an elongated spine to which 2 to 4 L12 dimers bind in a sequential fashion. Binds GTP-bound translation factors.

Functionally, forms part of the ribosomal stalk which helps the ribosome interact with GTP-bound translation factors. Is thus essential for accurate translation. This Thermoanaerobacter sp. (strain X514) protein is Large ribosomal subunit protein bL12.